The chain runs to 395 residues: Cytochrome b561 and DOMON domain-containing protein At5g47530 (395 aa).

A signal peptide spans 1–24; sequence MAISSNLLLCLSLFIFIITKSALA. In terms of domain architecture, DOMON spans 47–162; that stretch reads LDSFLHYTYD…GIINTVWQDG (116 aa). The 196-residue stretch at 176-371 folds into the Cytochrome b561 domain; sequence GNNVRSVSTL…LEGFTWYVVI (196 aa). 2 helical membrane-spanning segments follow: residues 210-230 and 242-262; these read IHGI…AIIA and AWFY…VAGW. Heme b-binding residues include histidine 211, histidine 247, and histidine 280. A helical transmembrane segment spans residues 282–302; sequence AVGIALFCLATIQVFAMFLRP. Histidine 316 lines the heme b pocket. Transmembrane regions (helical) follow at residues 318-338 and 351-371; these read TVGY…LDIL and IIVV…YVVI.

Requires heme b as cofactor.

The protein localises to the membrane. In terms of biological role, may act as a catecholamine-responsive trans-membrane electron transporter. In Arabidopsis thaliana (Mouse-ear cress), this protein is Cytochrome b561 and DOMON domain-containing protein At5g47530.